Reading from the N-terminus, the 489-residue chain is 3-octaprenyl-4-hydroxybenzoate carboxy-lyase (489 aa).

Residue N172 coordinates Mn(2+). Residues 175–177 (VYR), 189–191 (RWL), and 194–195 (RG) each bind prenylated FMN. Mn(2+) is bound at residue E240. The Proton donor role is filled by D288.

This sequence belongs to the UbiD family. Homohexamer. It depends on prenylated FMN as a cofactor. Mn(2+) is required as a cofactor.

The protein localises to the cell membrane. The catalysed reaction is a 4-hydroxy-3-(all-trans-polyprenyl)benzoate + H(+) = a 2-(all-trans-polyprenyl)phenol + CO2. It functions in the pathway cofactor biosynthesis; ubiquinone biosynthesis. Its function is as follows. Catalyzes the decarboxylation of 3-octaprenyl-4-hydroxy benzoate to 2-octaprenylphenol, an intermediate step in ubiquinone biosynthesis. This is 3-octaprenyl-4-hydroxybenzoate carboxy-lyase from Wigglesworthia glossinidia brevipalpis.